Here is a 359-residue protein sequence, read N- to C-terminus: Peptide chain release factor 1 (359 aa).

Gln236 is modified (N5-methylglutamine). A disordered region spans residues 288-308 (QDEQDAERKSTIGTGDRSERI). A compositionally biased stretch (basic and acidic residues) spans 293-308 (AERKSTIGTGDRSERI).

The protein belongs to the prokaryotic/mitochondrial release factor family. Methylated by PrmC. Methylation increases the termination efficiency of RF1.

Its subcellular location is the cytoplasm. In terms of biological role, peptide chain release factor 1 directs the termination of translation in response to the peptide chain termination codons UAG and UAA. This Streptococcus uberis (strain ATCC BAA-854 / 0140J) protein is Peptide chain release factor 1.